Consider the following 671-residue polypeptide: Probable potassium transport system protein Kup 2 (671 aa).

A run of 12 helical transmembrane segments spans residues 18–38 (GFLI…LYAM), 60–80 (VSLV…LIAL), 103–123 (WLIV…ALTP), 149–169 (VTTL…ASLV), 173–193 (FGPI…INSF), 218–238 (AGFF…ALYS), 252–272 (WPFV…WLLA), 292–312 (MVIY…QALI), 343–363 (LYIP…VLYF), 373–393 (YSLA…YFLI), 402–422 (IAFI…ASLV), and 424–444 (FING…VMFI).

Belongs to the HAK/KUP transporter (TC 2.A.72) family.

Its subcellular location is the cell membrane. The enzyme catalyses K(+)(in) + H(+)(in) = K(+)(out) + H(+)(out). Functionally, transport of potassium into the cell. Likely operates as a K(+):H(+) symporter. The polypeptide is Probable potassium transport system protein Kup 2 (Lactococcus lactis subsp. cremoris (strain SK11)).